The primary structure comprises 78 residues: MSCCGGKCGCGSSCSCGSGCGGCGMYPDLSYSEMTTTETLIVGVAPQKTYFEGSEMGVAAENGCKCGSDCKCDPCTCK.

It belongs to the metallothionein superfamily. Type 15 family.

Its function is as follows. Metallothioneins have a high content of cysteine residues that bind various heavy metals. The sequence is that of Metallothionein-like protein type 2 from Actinidia deliciosa (Kiwi).